A 128-amino-acid chain; its full sequence is DNA-directed RNA polymerase subunit omega (128 aa).

Belongs to the RNA polymerase subunit omega family. In terms of assembly, the RNAP catalytic core consists of 2 alpha, 1 beta, 1 beta' and 1 omega subunit. When a sigma factor is associated with the core the holoenzyme is formed, which can initiate transcription.

It catalyses the reaction RNA(n) + a ribonucleoside 5'-triphosphate = RNA(n+1) + diphosphate. Promotes RNA polymerase assembly. Latches the N- and C-terminal regions of the beta' subunit thereby facilitating its interaction with the beta and alpha subunits. This Neorickettsia sennetsu (strain ATCC VR-367 / Miyayama) (Ehrlichia sennetsu) protein is DNA-directed RNA polymerase subunit omega.